We begin with the raw amino-acid sequence, 346 residues long: tRNA/tmRNA (uracil-C(5))-methyltransferase (346 aa).

S-adenosyl-L-methionine-binding residues include Gln168, Tyr197, Asn202, Glu218, and Asp278. The Nucleophile role is filled by Cys303. Glu337 serves as the catalytic Proton acceptor.

It belongs to the class I-like SAM-binding methyltransferase superfamily. RNA M5U methyltransferase family. TrmA subfamily.

It carries out the reaction uridine(54) in tRNA + S-adenosyl-L-methionine = 5-methyluridine(54) in tRNA + S-adenosyl-L-homocysteine + H(+). The enzyme catalyses uridine(341) in tmRNA + S-adenosyl-L-methionine = 5-methyluridine(341) in tmRNA + S-adenosyl-L-homocysteine + H(+). In terms of biological role, dual-specificity methyltransferase that catalyzes the formation of 5-methyluridine at position 54 (m5U54) in all tRNAs, and that of position 341 (m5U341) in tmRNA (transfer-mRNA). This is tRNA/tmRNA (uracil-C(5))-methyltransferase from Campylobacter lari (strain RM2100 / D67 / ATCC BAA-1060).